Here is a 307-residue protein sequence, read N- to C-terminus: UDP-3-O-acyl-N-acetylglucosamine deacetylase (307 aa).

3 residues coordinate Zn(2+): His78, His241, and Asp245. His268 acts as the Proton donor in catalysis.

The protein belongs to the LpxC family. The cofactor is Zn(2+).

It carries out the reaction a UDP-3-O-[(3R)-3-hydroxyacyl]-N-acetyl-alpha-D-glucosamine + H2O = a UDP-3-O-[(3R)-3-hydroxyacyl]-alpha-D-glucosamine + acetate. It functions in the pathway glycolipid biosynthesis; lipid IV(A) biosynthesis; lipid IV(A) from (3R)-3-hydroxytetradecanoyl-[acyl-carrier-protein] and UDP-N-acetyl-alpha-D-glucosamine: step 2/6. Catalyzes the hydrolysis of UDP-3-O-myristoyl-N-acetylglucosamine to form UDP-3-O-myristoylglucosamine and acetate, the committed step in lipid A biosynthesis. The polypeptide is UDP-3-O-acyl-N-acetylglucosamine deacetylase (Polaromonas sp. (strain JS666 / ATCC BAA-500)).